Reading from the N-terminus, the 1365-residue chain is Glucosyltransferase-S (1365 aa).

A signal peptide (or 37) is located at residues 1–36; it reads MEKNLRYKLHKVKKQWVAIGVTTVTLSFLAGGQVVA. Composition is skewed to polar residues over residues 80 to 89 and 127 to 146; these read DQTATSQVSP and RQSAADTSTDGKAVPQTSDQ. 2 disordered regions span residues 80 to 99 and 127 to 152; these read DQTATSQVSPATDGRVDNQV and RQSAADTSTDGKAVPQTSDQPGHLET. Cell wall-binding repeat units follow at residues 146-166 and 168-187; these read QPGHLETVDGKTYYVDANGQR and KNYSMVIDGKTYYFDGQTGE. The tract at residues 200–1000 is catalytic; approximate; that stretch reads QDNVPDSYQA…KPIDPSVKIT (801 aa). Cell wall-binding repeat units follow at residues 1052 to 1071, 1073 to 1092, 1093 to 1112, 1113 to 1133, 1136 to 1159, 1160 to 1179, 1234 to 1253, 1278 to 1298, 1299 to 1318, and 1343 to 1362; these read ANGFISKNGGIHYLDKNGQE, KNRFKEISGSWYYFDSDGKM, ATGKTKIGNDTYLFMPNGKQ, LKEGVWYDGKKAYYYDDNGRT, NKGFVEFRVDGQDKWRYFNGDGTI, AIGLVSLDNRTLYFDAYGYQ, LTGEQTIDGQKVFFQDNGVQ, GKGWYSTSDDNWVYVNESGQV, LTGLQTIDGQTVYFDDKGIQ, and RDRWKNVDGNWYYFNRNGLA.

It belongs to the glycosyl hydrolase 70 family.

It carries out the reaction [(1-&gt;6)-alpha-D-glucosyl](n) + sucrose = [(1-&gt;6)-alpha-D-glucosyl](n+1) + D-fructose. Its activity is regulated as follows. Glucan synthesis by GTF-S is independent of primer glucan unlike GTF-I. Production of extracellular glucans, that are thought to play a key role in the development of the dental plaque because of their ability to adhere to smooth surfaces and mediate the aggregation of bacterial cells and food debris. The protein is Glucosyltransferase-S (gtfS) of Streptococcus downei (Streptococcus sobrinus).